The primary structure comprises 353 residues: Transcription termination/antitermination protein NusG (353 aa).

The region spanning 301–335 is the KOW domain; the sequence is VGDMVKIISGPFEDFAGVIKEIDPERQELKVNVTI.

This sequence belongs to the NusG family.

Regulated by autoinhibition via interaction of the N-terminal and the C-terminal domains. Autoinhibition may prevent NusG from interacting prematurely with other components of the transcription complex or non-specific interactions with other cellular components. Its function is as follows. Participates in transcription elongation, termination and antitermination. In Thermotoga maritima (strain ATCC 43589 / DSM 3109 / JCM 10099 / NBRC 100826 / MSB8), this protein is Transcription termination/antitermination protein NusG.